The primary structure comprises 50 residues: Mating-type pheromone BAP1(3) (50 aa).

Cys-47 bears the Cysteine methyl ester mark. A lipid anchor (S-farnesyl cysteine) is attached at Cys-47. Positions 48-50 (VVA) are cleaved as a propeptide — removed in mature form.

Its subcellular location is the cell membrane. In terms of biological role, activates B-regulated development. This chain is Mating-type pheromone BAP1(3) (BAP1(3)), found in Schizophyllum commune (Split gill fungus).